Reading from the N-terminus, the 207-residue chain is 3-hexulose-6-phosphate synthase (207 aa).

The protein belongs to the HPS/KGPDC family. HPS subfamily.

It carries out the reaction D-ribulose 5-phosphate + formaldehyde = D-arabino-hex-3-ulose 6-phosphate. The protein operates within one-carbon metabolism; formaldehyde assimilation via RuMP pathway; D-fructose 6-phosphate from D-ribulose 5-phosphate and formaldehyde: step 1/2. Its function is as follows. Catalyzes the condensation of ribulose 5-phosphate with formaldehyde to form 3-hexulose 6-phosphate. The chain is 3-hexulose-6-phosphate synthase (rmpA) from Mycobacterium gastri.